The primary structure comprises 134 residues: Complexin-1 (134 aa).

2 disordered regions span residues 1–60 and 74–114; these read MEFV…AERE and KKEE…EEDE. Positions 15–60 are enriched in basic and acidic residues; it reads DMGKMLGGDEEKDPDAAKKEEERQEALRQAEEERKAKYAKMEAERE. Residues 29–64 adopt a coiled-coil conformation; that stretch reads DAAKKEEERQEALRQAEEERKAKYAKMEAEREVMRQ. The interaction with the SNARE complex stretch occupies residues 48-70; that stretch reads RKAKYAKMEAEREVMRQGIRDKY.

The protein belongs to the complexin/synaphin family. As to quaternary structure, binds to the SNARE core complex containing SNAP25, VAMP2 and STX1A. Nervous system, and pancreatic islet cells. Present in many brain regions, including hippocampus and cerebellum. In the retina, present at conventional amacrine cell synapses (at protein level).

It localises to the cytoplasm. The protein localises to the cytosol. Its subcellular location is the perikaryon. The protein resides in the presynapse. Its function is as follows. Positively regulates a late step in exocytosis of various cytoplasmic vesicles, such as synaptic vesicles and other secretory vesicles. Organizes the SNAREs into a cross-linked zigzag topology that, when interposed between the vesicle and plasma membranes, is incompatible with fusion, thereby preventing SNAREs from releasing neurotransmitters until an action potential arrives at the synapse. Also involved in glucose-induced secretion of insulin by pancreatic beta-cells. Essential for motor behavior. The protein is Complexin-1 (Cplx1) of Mus musculus (Mouse).